A 320-amino-acid chain; its full sequence is NAC domain-containing protein 20 (320 aa).

The 157-residue stretch at 14–170 folds into the NAC domain; sequence LPPGFRFHPT…DWAVCRIFHK (157 aa). A DNA-binding region spans residues 114–176; that stretch reads IGMKKTLVFY…IFHKSSGIKK (63 aa).

Forms homodimers. Forms heterodimers with NAC26. As to expression, expressed in developing seeds.

Its subcellular location is the nucleus. The protein localises to the endoplasmic reticulum. Functionally, transcription factor that acts redundantly with NAC26 to regulate the expression of genes involved in the biosynthesis of starch and storage proteins in grain. Directly binds to the promoters of starch synthase 1 (SS1), pullulanase (PUL), glutelin A1 (GLUA1), glutelins B4 and B5 (GLUB4 and GLUB5), alpha-globulin and 16 kDa prolamin, and activates their expression. Possesses transactivation activity in yeast. This is NAC domain-containing protein 20 from Oryza sativa subsp. indica (Rice).